A 232-amino-acid chain; its full sequence is U2 small nuclear ribonucleoprotein B'' (232 aa).

An RRM 1 domain is found at 10 to 89 (QSIYIQNLNE…KPMRLQYAKA (80 aa)). Residues 100–157 (TFVPKDKKRKQEEKVERKREDSQRPNTANGPSANGPSANNGVPAPSFQPSGQETMPPN) form a disordered region. Over residues 108–122 (RKQEEKVERKREDSQ) the composition is skewed to basic and acidic residues. Composition is skewed to polar residues over residues 123 to 139 (RPNTANGPSANGPSANN) and 146 to 156 (FQPSGQETMPP). An RRM 2 domain is found at 158–232 (NILFIQNLPH…NPMVISFAKK (75 aa)).

Belongs to the RRM U1 A/B'' family. As to quaternary structure, component of the spliceosome where it is associated with snRNP U2.

The protein localises to the nucleus. It localises to the cajal body. The protein resides in the nucleoplasm. Its subcellular location is the cytoplasm. Functionally, involved in nuclear pre-mRNA splicing. This Arabidopsis thaliana (Mouse-ear cress) protein is U2 small nuclear ribonucleoprotein B'' (U2B'').